The sequence spans 294 residues: Lipoyl synthase 1 (294 aa).

[4Fe-4S] cluster-binding residues include C38, C43, C49, C64, C68, C71, and S279. Residues 50–268 enclose the Radical SAM core domain; sequence FAGGTATFLI…EEGQTRFGFL (219 aa).

It belongs to the radical SAM superfamily. Lipoyl synthase family. [4Fe-4S] cluster serves as cofactor.

It localises to the cytoplasm. It carries out the reaction [[Fe-S] cluster scaffold protein carrying a second [4Fe-4S](2+) cluster] + N(6)-octanoyl-L-lysyl-[protein] + 2 oxidized [2Fe-2S]-[ferredoxin] + 2 S-adenosyl-L-methionine + 4 H(+) = [[Fe-S] cluster scaffold protein] + N(6)-[(R)-dihydrolipoyl]-L-lysyl-[protein] + 4 Fe(3+) + 2 hydrogen sulfide + 2 5'-deoxyadenosine + 2 L-methionine + 2 reduced [2Fe-2S]-[ferredoxin]. Its pathway is protein modification; protein lipoylation via endogenous pathway; protein N(6)-(lipoyl)lysine from octanoyl-[acyl-carrier-protein]: step 2/2. In terms of biological role, catalyzes the radical-mediated insertion of two sulfur atoms into the C-6 and C-8 positions of the octanoyl moiety bound to the lipoyl domains of lipoate-dependent enzymes, thereby converting the octanoylated domains into lipoylated derivatives. The sequence is that of Lipoyl synthase 1 from Prochlorococcus marinus (strain SARG / CCMP1375 / SS120).